A 248-amino-acid polypeptide reads, in one-letter code: uncharacterized protein (248 aa).

A helical transmembrane segment spans residues 104–122 (CDVAACVGATWIAGGFAGA).

It is found in the membrane. This is an uncharacterized protein from Escherichia coli (strain K12).